We begin with the raw amino-acid sequence, 448 residues long: Glutamyl-tRNA reductase (448 aa).

Substrate-binding positions include 49 to 52 (TCNR), Ser-109, 114 to 116 (ETQ), and Gln-120. The active-site Nucleophile is the Cys-50. NADP(+) is bound at residue 189-194 (GAGEMS).

Belongs to the glutamyl-tRNA reductase family. As to quaternary structure, homodimer.

The enzyme catalyses (S)-4-amino-5-oxopentanoate + tRNA(Glu) + NADP(+) = L-glutamyl-tRNA(Glu) + NADPH + H(+). It functions in the pathway porphyrin-containing compound metabolism; protoporphyrin-IX biosynthesis; 5-aminolevulinate from L-glutamyl-tRNA(Glu): step 1/2. Catalyzes the NADPH-dependent reduction of glutamyl-tRNA(Glu) to glutamate 1-semialdehyde (GSA). The sequence is that of Glutamyl-tRNA reductase from Staphylococcus haemolyticus (strain JCSC1435).